Consider the following 418-residue polypeptide: Transmembrane protease serine 11A (418 aa).

Residues 1–18 are Cytoplasmic-facing; that stretch reads MMYRTVGFGTRSRNLKPW. Residues 19 to 39 form a helical; Signal-anchor for type II membrane protein membrane-spanning segment; it reads MIAVLIVLSLTVVAVTIGLLV. Residues 40 to 418 are Extracellular-facing; the sequence is HFLVFDQKKE…RNWIASKTGI (379 aa). An SEA domain is found at 47–164; the sequence is KKEYYHGSFK…SSVQVNAMSS (118 aa). Residue asparagine 153 is glycosylated (N-linked (GlcNAc...) asparagine). The 231-residue stretch at 187 to 417 folds into the Peptidase S1 domain; sequence IASGVIAPKA…YRNWIASKTG (231 aa). A disulfide bond links cysteine 212 and cysteine 228. Residues histidine 227 and aspartate 272 each act as charge relay system in the active site. The N-linked (GlcNAc...) asparagine glycan is linked to asparagine 303. Disulfide bonds link cysteine 337/cysteine 353 and cysteine 364/cysteine 393. The active-site Charge relay system is the serine 368.

It belongs to the peptidase S1 family. In terms of assembly, may interact with ZBTB17. Expressed in esophagus, liver, colon and lung. Down-regulated in esophagus cancers.

It is found in the membrane. Its function is as follows. Probable serine protease which may play a role in cellular senescence. Overexpression inhibits cell growth and induce G1 cell cycle arrest. The chain is Transmembrane protease serine 11A (TMPRSS11A) from Homo sapiens (Human).